Here is a 355-residue protein sequence, read N- to C-terminus: Phosphoribosylformylglycinamidine cyclo-ligase (355 aa).

It belongs to the AIR synthase family.

It is found in the cytoplasm. It catalyses the reaction 2-formamido-N(1)-(5-O-phospho-beta-D-ribosyl)acetamidine + ATP = 5-amino-1-(5-phospho-beta-D-ribosyl)imidazole + ADP + phosphate + H(+). The protein operates within purine metabolism; IMP biosynthesis via de novo pathway; 5-amino-1-(5-phospho-D-ribosyl)imidazole from N(2)-formyl-N(1)-(5-phospho-D-ribosyl)glycinamide: step 2/2. This Methylobacterium nodulans (strain LMG 21967 / CNCM I-2342 / ORS 2060) protein is Phosphoribosylformylglycinamidine cyclo-ligase.